Consider the following 321-residue polypeptide: PIH1 domain-containing protein 2 (321 aa).

It belongs to the PIH1 family.

The sequence is that of PIH1 domain-containing protein 2 (pih1d2) from Xenopus tropicalis (Western clawed frog).